Reading from the N-terminus, the 307-residue chain is Transcription initiation factor IIB (307 aa).

2 tandem repeats follow at residues 123–206 (NELE…LREL) and 217–298 (DYVT…ELTQ).

It belongs to the TFIIB family.

In terms of biological role, stabilizes TBP binding to an archaeal box-A promoter. Also responsible for recruiting RNA polymerase II to the pre-initiation complex (DNA-TBP-TFIIB). The sequence is that of Transcription initiation factor IIB from Sulfolobus acidocaldarius (strain ATCC 33909 / DSM 639 / JCM 8929 / NBRC 15157 / NCIMB 11770).